The primary structure comprises 177 residues: Large ribosomal subunit protein uL6 (177 aa).

Belongs to the universal ribosomal protein uL6 family. As to quaternary structure, part of the 50S ribosomal subunit.

In terms of biological role, this protein binds to the 23S rRNA, and is important in its secondary structure. It is located near the subunit interface in the base of the L7/L12 stalk, and near the tRNA binding site of the peptidyltransferase center. This chain is Large ribosomal subunit protein uL6, found in Proteus mirabilis (strain HI4320).